A 1307-amino-acid polypeptide reads, in one-letter code: MDFVPRLNSVLTLVLSGLWHFGLTATNCDNCDDPLASFLSLRAFSSSSDVTGSSSPAHLNWRMGTGGWSPAYSNAQQWLQIDLGNRVEITAVATQGRYGSSDWVTSYRLMFSDTGHNWQEYKQEDNIWTFVGNMNADSVVHHKLLHSVRARFVRFVPLKWNPDGKIGMRMEVYGCSYRSDVADFDGHSSLLYRFNQKTMSTLKDMISLKFKSMQGDGVLLHGEGQRGDYITLELQNGRLALYLNLDGGQARLSSIAPSAILGSLLDDQQWHSVLLERVGKQTNFTVDTNTEHFQIKAETDALDIDYELSFGGIPIPSKPGTFLKKSFHGCIENLYYNGVNIIDLAKRRKHQIYSGNVTFSCSEPQIVPITFVNSRSSYLLLPGTPRIDGLSVSFQFRTWNEDGLLLSTELSESSGTLLLILEGGTLRLLIKKVAGHGTEIITGSGLNDGLWHFVSINARRNRVTLTLDNDAASLPPDISWLQIYSGNSYYFGGCPDNLTDSQCLNPIKAFQGCMRLIFIDNQPKDLISVQQGSLGNFSDLHIDLCSIKDRCLPNYCEHGGHCVQTWTTFYCNCSNTGYTGATCHDSIYEQSCEVYRHRGNNTSGFFFVDSDGSGPLEPLQLYCNITEDKIWMTIQHNITELTQVQGSNAEKPYSMTLNYGGSMDQLVALIDGSEYCEQEVTYHCRRSRLLNTPDGAPFTWWIGRSNEKHHYWGGSVPGIQKCGCGLEQSCLDIGHFCNCDADTDEWANDTGFLSFKDHLPVTQIIITDTNRSNSEAAWRIGPLRCYGDRHFWNAVSFSTEASYLHFPTSHVEFSIDISFFFKTTALSGVFIENLGIKDFLRLELSSPSEVTFAIDVGNGPTELLVQSPSPLNDNQWHYIQAERNLKETSLQVDNFPRIMRETTEKGHFQLQLNSQMFVGGTSSRQKGFLGCIRSLHLNGQNIDLEERGMVTSGVRPGCPGHCSSYGNNCHNGGKCVEKHNSYSCDCTKSPYEGPFCQKEISALFDSTTSITYMFQEPYPVSKNTSTSSSAIYTDTVLSKETILLSFVTAQAPTLLLYLNFSTPSFLALLLSRNGSLQILYHLSKGESHMFTVSTENLANRRVHHVKMNRDGTELSIQMDQQLFSYNFPLEAEFLTVRSLILGKVTETLGLDPRVARANSLGFIGCLSSVQYNHIAPLKAALRHASIAPATVQGSLREFSCGSMVDSDVNAVTTVYSSSDPFGKTDDHDPLTNAVLSDSAVIGGVIAVVTFITFCVIGIMTRFLYQHKQSHCTSQKKEKEYSENLDSSFRHDIDLQSTTSKCKREYFI.

Residues 1-24 (MDFVPRLNSVLTLVLSGLWHFGLT) form the signal peptide. Over 25–1238 (ATNCDNCDDP…PLTNAVLSDS (1214 aa)) the chain is Extracellular. The 145-residue stretch at 31–175 (CDDPLASFLS…IGMRMEVYGC (145 aa)) folds into the F5/8 type C domain. C31 and C175 are joined by a disulfide. Laminin G-like domains are found at residues 181 to 361 (VADF…TFSC) and 368 to 545 (PITF…IDLC). N283 is a glycosylation site (N-linked (GlcNAc...) asparagine). C330 and C361 are disulfide-bonded. N497 is a glycosylation site (N-linked (GlcNAc...) asparagine). Intrachain disulfides connect C513/C545, C551/C562, C556/C571, and C573/C583. In terms of domain architecture, EGF-like 1 spans 547 to 584 (IKDRCLPNYCEHGGHCVQTWTTFYCNCSNTGYTGATCH). The region spanning 585-792 (DSIYEQSCEV…LRCYGDRHFW (208 aa)) is the Fibrinogen C-terminal domain. Residues N600, N624, and N637 are each glycosylated (N-linked (GlcNAc...) asparagine). A Laminin G-like 3 domain is found at 793–958 (NAVSFSTEAS…MVTSGVRPGC (166 aa)). 5 disulfides stabilise this stretch: C931–C958, C962–C975, C969–C984, C986–C996, and C1165–C1200. The EGF-like 2 domain occupies 959–997 (PGHCSSYGNNCHNGGKCVEKHNSYSCDCTKSPYEGPFCQ). The Laminin G-like 4 domain maps to 1019-1200 (PVSKNTSTSS…VQGSLREFSC (182 aa)). Residues 1239-1259 (AVIGGVIAVVTFITFCVIGIM) traverse the membrane as a helical segment. Residues 1260 to 1307 (TRFLYQHKQSHCTSQKKEKEYSENLDSSFRHDIDLQSTTSKCKREYFI) lie on the Cytoplasmic side of the membrane.

It belongs to the neurexin family.

The protein localises to the membrane. May play a role in the correct development and proper functioning of the peripheral and central nervous system and be involved in cell adhesion and intercellular communication. The polypeptide is Contactin-associated protein like 5-3 (Cntnap5c) (Rattus norvegicus (Rat)).